A 165-amino-acid polypeptide reads, in one-letter code: Urease accessory protein UreE (165 aa).

It belongs to the UreE family.

The protein localises to the cytoplasm. Its function is as follows. Involved in urease metallocenter assembly. Binds nickel. Probably functions as a nickel donor during metallocenter assembly. The polypeptide is Urease accessory protein UreE (Flavobacterium johnsoniae (strain ATCC 17061 / DSM 2064 / JCM 8514 / BCRC 14874 / CCUG 350202 / NBRC 14942 / NCIMB 11054 / UW101) (Cytophaga johnsonae)).